A 327-amino-acid chain; its full sequence is RNA ligase 1 (327 aa).

Mg(2+) is required as a cofactor. Requires Mn(2+) as cofactor. Post-translationally, AMPylates itself (auto-AMPylation).

The catalysed reaction is ATP + (ribonucleotide)n-3'-hydroxyl + 5'-phospho-(ribonucleotide)m = (ribonucleotide)n+m + AMP + diphosphate.. Functionally, functions as an RNA ligase, in vitro. The ligation reaction entails three nucleotidyl transfer steps. In the first step, the RNA ligase reacts with ATP in the absence of nucleic acid to form a covalent ligase-AMP intermediate and release pyrophosphate. In step 2, the ligase-AMP binds to the nucleic acid and transfers the adenylate to the 5'-PO4 terminus to form an adenylylated intermediate. In step 3, the RNA ligase directs the attack of the 3'-OH on the 5'-phosphoanhydride linkage, resulting in a repaired 3'-5' phosphodiester and release of AMP. Exhibits selectivity for single-stranded RNA substrates and may not have nick-sealing activity on double-stranded DNA-RNA hybrids. May play a role in maintaining RNA integrity under stress conditions, for example in response to reactive oxygen species (ROS). The polypeptide is RNA ligase 1 (Mus musculus (Mouse)).